The following is a 358-amino-acid chain: Aromatic amino acid aminotransferase (358 aa).

The residue at position 214 (lysine 214) is an N6-(pyridoxal phosphate)lysine.

Belongs to the class-II pyridoxal-phosphate-dependent aminotransferase family. Homodimer. The cofactor is pyridoxal 5'-phosphate.

It catalyses the reaction an aromatic L-alpha-amino acid + 2-oxoglutarate = an aromatic oxo-acid + L-glutamate. Functionally, aminotransferase that catalyzes the conversion of aromatic amino acids and 2-oxoglutarate into corresponding aromatic oxo acids and L-glutamate. This chain is Aromatic amino acid aminotransferase, found in Rhodococcus erythropolis (strain PR4 / NBRC 100887).